A 398-amino-acid polypeptide reads, in one-letter code: Acetate kinase (398 aa).

Position 7 (Asn-7) interacts with Mg(2+). Lys-14 contacts ATP. Arg-91 serves as a coordination point for substrate. Asp-148 acts as the Proton donor/acceptor in catalysis. Residues 208–212, 283–285, and 331–335 contribute to the ATP site; these read HLGNG, DFR, and GLGEN. Position 384 (Glu-384) interacts with Mg(2+).

Belongs to the acetokinase family. In terms of assembly, homodimer. Requires Mg(2+) as cofactor. Mn(2+) serves as cofactor.

It is found in the cytoplasm. It catalyses the reaction acetate + ATP = acetyl phosphate + ADP. It functions in the pathway metabolic intermediate biosynthesis; acetyl-CoA biosynthesis; acetyl-CoA from acetate: step 1/2. Its function is as follows. Catalyzes the formation of acetyl phosphate from acetate and ATP. Can also catalyze the reverse reaction. This Natranaerobius thermophilus (strain ATCC BAA-1301 / DSM 18059 / JW/NM-WN-LF) protein is Acetate kinase.